We begin with the raw amino-acid sequence, 124 residues long: Large ribosomal subunit protein bL12 (124 aa).

The protein belongs to the bacterial ribosomal protein bL12 family. In terms of assembly, homodimer. Part of the ribosomal stalk of the 50S ribosomal subunit. Forms a multimeric L10(L12)X complex, where L10 forms an elongated spine to which 2 to 4 L12 dimers bind in a sequential fashion. Binds GTP-bound translation factors.

Forms part of the ribosomal stalk which helps the ribosome interact with GTP-bound translation factors. Is thus essential for accurate translation. The sequence is that of Large ribosomal subunit protein bL12 from Allorhizobium ampelinum (strain ATCC BAA-846 / DSM 112012 / S4) (Agrobacterium vitis (strain S4)).